The following is a 95-amino-acid chain: Citrate lyase acyl carrier protein (95 aa).

Serine 14 is modified (O-(phosphoribosyl dephospho-coenzyme A)serine).

This sequence belongs to the CitD family. In terms of assembly, oligomer with a subunit composition of (alpha,beta,gamma)6.

Its subcellular location is the cytoplasm. In terms of biological role, covalent carrier of the coenzyme of citrate lyase. In Haemophilus ducreyi (strain 35000HP / ATCC 700724), this protein is Citrate lyase acyl carrier protein.